Reading from the N-terminus, the 286-residue chain is F-box/SPRY domain-containing protein 1 (286 aa).

At A2 the chain carries N-acetylalanine. Positions 33-82 (AGAGGRLPSRVLELVFSYLELSELRSCALVCKHWYRCLHGDENSEVWRSL) constitute an F-box domain. Residues 92-284 (LRTDILCNLP…VTLVYLGKPL (193 aa)) form the B30.2/SPRY domain.

This sequence belongs to the FBXO45/Fsn family. Forms a complex with MYCBP2 and SKP1. Interacts with HEY1; leading to FBXO45 nuclear translocation. Interacts (via SPRY domain) with CDH2.

It localises to the secreted. It is found in the postsynaptic cell membrane. Its subcellular location is the presynaptic cell membrane. The protein localises to the nucleus. The protein operates within protein modification; protein ubiquitination. In terms of biological role, component of E3 ubiquitin ligase complex consisting of FBXO45, MYCBP2 and SKP1. Functions in substrate recognition but also plays an important role in assembly of the complex. Required for normal neuromuscular synaptogenesis, axon pathfinding and neuronal migration. Regulates neuron migration during brain development through interaction with N-cadherin/CDH2 after secretion via a non-classical mechanism. Plays a role in the regulation of neurotransmission at mature neurons. May control synaptic activity by controlling UNC13A via ubiquitin dependent pathway. Specifically recognizes TP73, promoting its ubiquitination and degradation. Polyubiquitinates NMNAT2, an adenylyltransferase that acts as an axon maintenance factor, and regulates its stability and degradation by the proteasome. Also acts by ubiquitinating FBXW7 during prolonged mitotic arrest and promotes FBXW7 proteasomal degradation. Induces subsequently an increase in mitotic slippage and prevents mitotic cell death. In response to influenza infection, mediates interferon-lambda receptor IFNLR1 polyubiquitination and degradation through the ubiquitin-proteasome system by docking with its intracellular receptor domain. The sequence is that of F-box/SPRY domain-containing protein 1 (FBXO45) from Homo sapiens (Human).